Reading from the N-terminus, the 75-residue chain is Endogenous retrovirus group K member 10 Np9 protein (75 aa).

The segment at 21-43 (PTAPKRQRPSRTGHDDDGGFVEK) is disordered. Residues 32-43 (TGHDDDGGFVEK) are compositionally biased toward basic and acidic residues.

Its subcellular location is the nucleus. In terms of biological role, may possess a function in tumorigenesis. In Homo sapiens (Human), this protein is Endogenous retrovirus group K member 10 Np9 protein (ERVK-10).